The following is a 255-amino-acid chain: Putative SET domain-containing protein L678 (255 aa).

The SET domain maps to 5 to 176; sequence NRISEVFIKK…TGEELTDNYV (172 aa). The disordered stretch occupies residues 235 to 255; it reads LQQNSKNLKKNPKKTIKATPK.

This sequence belongs to the class V-like SAM-binding methyltransferase superfamily.

In Acanthamoeba polyphaga mimivirus (APMV), this protein is Putative SET domain-containing protein L678.